A 750-amino-acid chain; its full sequence is Retron Eco8 OLD nuclease (750 aa).

Residues 1 to 173 (MTIESIRVKN…IDLYDWNPIW (173 aa)) are ATPase domain N-terminus. 33 to 37 (NVGKS) contacts ATP. Residues 174–260 (KLISNLNSFN…TQSDGTNSNK (87 aa)) are dimerization domain. Positions 261–390 (FLETLLHLLI…FSDNEARLFF (130 aa)) are ATPase domain C-terminus. Positions 391 to 704 (SEYIVFVEGA…SGWVTTFLNY (314 aa)) are toprim domain. Residues E398, E402, D450, D452, S623, and E641 each coordinate a divalent metal cation.

Belongs to the class 1 OLD nuclease family. In terms of assembly, homodimer. A divalent metal cation serves as cofactor.

In terms of biological role, probable nuclease member of antiviral defense system retron Eco8, composed of an reverse transcriptase (RT), this nuclease and a non-coding RNA (ncRNA) encoded between them. Expression of retron Eco8 confers protection against bacteriophages T4, T6, T7 and SECphi4, SECphi6 and SECphi18. At multiplicity of infection (MOI) of 0.02 cultures slow growth when infected with SECphi4 but do not collapse, at MOI 2 cultures collapse. When the retron is cloned in another E.coli strain synthesizes msDNA (a branched RNA linked by a 2',5'-phosphodiester bond to a single-stranded DNA). The retron transcript serves as primer and template to the reaction, and codes for the RT. This Escherichia coli protein is Retron Eco8 OLD nuclease.